The chain runs to 494 residues: Inositol-trisphosphate 3-kinase homolog (494 aa).

ATP-binding positions include Ser206, Lys218, 260–262, and Asp276; that span reads EDL. Residues Lys278 and 322–329 contribute to the substrate site; that span reads KLRYMQFR. 2 residues coordinate ATP: Lys346 and Asp426. Lys429 is a substrate binding site.

This sequence belongs to the inositol phosphokinase (IPK) family. Expressed in spermatheca.

The catalysed reaction is 1D-myo-inositol 1,4,5-trisphosphate + ATP = 1D-myo-inositol 1,3,4,5-tetrakisphosphate + ADP + H(+). With respect to regulation, unlike mammalian IP3K, may not be regulated by calmodulin. Functionally, probably by regulating inositol 1,4,5-trisphosphate levels, negatively regulates posterior body wall muscle contractions required for defecation and let-23 signaling pathway that controls spermathecal dilation and ovulation. May also regulate ovulation downstream of actin cross-linker fln-1. This Caenorhabditis elegans protein is Inositol-trisphosphate 3-kinase homolog.